Here is a 218-residue protein sequence, read N- to C-terminus: Probable 3-keto-L-gulonate-6-phosphate decarboxylase (218 aa).

Aspartate 11 is a binding site for substrate. Mg(2+)-binding residues include glutamate 33 and aspartate 62. Arginine 194 lines the substrate pocket.

This sequence belongs to the HPS/KGPDC family. KGPDC subfamily. Mg(2+) is required as a cofactor.

The catalysed reaction is 3-dehydro-L-gulonate 6-phosphate + H(+) = L-xylulose 5-phosphate + CO2. It functions in the pathway cofactor degradation; L-ascorbate degradation; D-xylulose 5-phosphate from L-ascorbate: step 2/4. Catalyzes the decarboxylation of 3-keto-L-gulonate-6-P into L-xylulose-5-P. Is involved in the anaerobic L-ascorbate utilization. This Mycoplasma pneumoniae (strain ATCC 29342 / M129 / Subtype 1) (Mycoplasmoides pneumoniae) protein is Probable 3-keto-L-gulonate-6-phosphate decarboxylase (ulaD).